The sequence spans 638 residues: MGKIIGIDLGTTNSCVAVLDGDSVRVIENAEGDRTTPSIIGYTAEGETLVGQPAKRQSVTNPENTLYAIKRLIGRRFEDKETQRDIDIMPFGIVKADNGDAWVQVKGEKIAPPQVSAEVLKKMKKTAEDFLGETVTEAVITVPAYFNDSQRQATKDAGRIAGLEVKRIINEPTAAALAYGMDKQEGDKVVAVYDLGGGTFDISIIEIDEMDGEHTFEVLATNGDTHLGGEDFDNRLINYLVAEFKKDQGMDLTSDPLAMQRLKEAAEKAKCELSSAQQTDVNLPYITADGSGPKHMNIKVTRAKLESLVEDMVKATLEPLKQALKDADLSVSKIDDVILVGGQSRMPLVQKTVTDFFGKEPRKDVNPDEAVASGAAIQAGVLSGDVTDVLLLDVTPLSLGIETMGGVMTKVIDKNTTIPTKQSQTFSTADDNQAAVTVHVCQGERKQASANKSLGQFNLEGIEPAQRGTPQIEVTFDIDADGILHVTAKDKNTGKEQKITIKASSGLSDEEVEQMVRDAEANADADAKFEELVTARNQADGMIHATRKQVEEAGEELPSEDKEKIEAALTELEEAVKGDDKEVIEAKTQALMEASAKLMEIAQAKEQAQSAPEGAQEADAAPADDVVDAEFEEVKDDK.

A Phosphothreonine; by autocatalysis modification is found at Thr199. Residues 604–626 (AKEQAQSAPEGAQEADAAPADDV) are disordered. Residues 613–624 (EGAQEADAAPAD) are compositionally biased toward low complexity.

The protein belongs to the heat shock protein 70 family.

Acts as a chaperone. The sequence is that of Chaperone protein DnaK 2 from Colwellia psychrerythraea (strain 34H / ATCC BAA-681) (Vibrio psychroerythus).